The chain runs to 170 residues: Adenine phosphoribosyltransferase (170 aa).

Belongs to the purine/pyrimidine phosphoribosyltransferase family. As to quaternary structure, homodimer.

The protein resides in the cytoplasm. The enzyme catalyses AMP + diphosphate = 5-phospho-alpha-D-ribose 1-diphosphate + adenine. Its pathway is purine metabolism; AMP biosynthesis via salvage pathway; AMP from adenine: step 1/1. In terms of biological role, catalyzes a salvage reaction resulting in the formation of AMP, that is energically less costly than de novo synthesis. This Alkaliphilus metalliredigens (strain QYMF) protein is Adenine phosphoribosyltransferase.